The primary structure comprises 126 residues: Aspartate 1-decarboxylase (126 aa).

The Schiff-base intermediate with substrate; via pyruvic acid role is filled by Ser25. Position 25 is a pyruvic acid (Ser) (Ser25). Thr57 lines the substrate pocket. Tyr58 serves as the catalytic Proton donor. Residue 73 to 75 (GSA) participates in substrate binding.

The protein belongs to the PanD family. In terms of assembly, heterooctamer of four alpha and four beta subunits. Pyruvate serves as cofactor. Post-translationally, is synthesized initially as an inactive proenzyme, which is activated by self-cleavage at a specific serine bond to produce a beta-subunit with a hydroxyl group at its C-terminus and an alpha-subunit with a pyruvoyl group at its N-terminus.

It is found in the cytoplasm. The catalysed reaction is L-aspartate + H(+) = beta-alanine + CO2. It participates in cofactor biosynthesis; (R)-pantothenate biosynthesis; beta-alanine from L-aspartate: step 1/1. In terms of biological role, catalyzes the pyruvoyl-dependent decarboxylation of aspartate to produce beta-alanine. The protein is Aspartate 1-decarboxylase of Acidovorax ebreus (strain TPSY) (Diaphorobacter sp. (strain TPSY)).